The chain runs to 389 residues: tRNA (guanine-N(7)-)-methyltransferase non-catalytic subunit TRM82 (389 aa).

WD repeat units follow at residues 44 to 86, 134 to 179, and 184 to 222; these read QNVP…HQLK, GHTS…KGFL, and QFVS…LITE.

The protein belongs to the WD repeat TRM82 family. As to quaternary structure, forms a heterodimer with the catalytic subunit TRM8.

Its subcellular location is the nucleus. The protein operates within tRNA modification; N(7)-methylguanine-tRNA biosynthesis. Its function is as follows. Required for the formation of N(7)-methylguanine at position 46 (m7G46) in tRNA. In the complex, it is required to stabilize and induce conformational changes of the catalytic subunit. This Lodderomyces elongisporus (strain ATCC 11503 / CBS 2605 / JCM 1781 / NBRC 1676 / NRRL YB-4239) (Yeast) protein is tRNA (guanine-N(7)-)-methyltransferase non-catalytic subunit TRM82.